A 527-amino-acid polypeptide reads, in one-letter code: Matrix metalloproteinase-19 (527 aa).

An N-terminal signal peptide occupies residues 1-18 (MDWQQLWLAFLLPMTVSG). A propeptide spanning residues 19–98 (RALGPTEKEA…EDPFNQKSLK (80 aa)) is cleaved from the precursor. The Cysteine switch signature appears at 84 to 91 (PRCGLEDP). Cys-86 provides a ligand contact to Zn(2+). Asn-109 carries an N-linked (GlcNAc...) asparagine glycan. A Zn(2+)-binding site is contributed by His-213. Glu-214 is a catalytic residue. Zn(2+) is bound by residues His-217 and His-223. 4 Hemopexin repeats span residues 286–333 (PNPC…WEGL), 334–372 (PGNL…FPMK), 377–425 (EPNL…FTGV), and 426–471 (PDRP…WMHC). A disulfide bond links Cys-289 and Cys-471. N-linked (GlcNAc...) asparagine glycosylation is found at Asn-464 and Asn-479. The disordered stretch occupies residues 473-500 (SQTPDTNSSTGDVTPSTTDTVLGTTPST). Asp-512 carries the GPI-anchor amidated aspartate lipid modification. Positions 513–527 (SASLSFSANVTLLGA) are cleaved as a propeptide — removed in mature form. N-linked (GlcNAc...) asparagine glycosylation is present at Asn-521.

It belongs to the peptidase M10A family. Zn(2+) is required as a cofactor. The cofactor is Ca(2+). Activated by autolytic cleavage after Lys-98. Post-translationally, tyrosine phosphorylated by PKDCC/VLK. As to expression, highly expressed in the liver. Expressed in the arterial tunica media of large blood vessels.

It localises to the cell membrane. The protein resides in the secreted. Its subcellular location is the extracellular space. The protein localises to the extracellular matrix. Endopeptidase that degrades various components of the extracellular matrix, such as aggrecan and cartilage oligomeric matrix protein (comp), during development, haemostasis and pathological conditions (arthritic disease). May also play a role in neovascularization or angiogenesis. Hydrolyzes collagen type IV, laminin, nidogen, nascin-C isoform, fibronectin, and type I gelatin. The polypeptide is Matrix metalloproteinase-19 (Mmp19) (Mus musculus (Mouse)).